Consider the following 119-residue polypeptide: Holo-[acyl-carrier-protein] synthase (119 aa).

Residues Asp-6 and Glu-51 each contribute to the Mg(2+) site.

This sequence belongs to the P-Pant transferase superfamily. AcpS family. Mg(2+) is required as a cofactor.

It localises to the cytoplasm. The enzyme catalyses apo-[ACP] + CoA = holo-[ACP] + adenosine 3',5'-bisphosphate + H(+). Functionally, transfers the 4'-phosphopantetheine moiety from coenzyme A to a Ser of acyl-carrier-protein. The polypeptide is Holo-[acyl-carrier-protein] synthase (Sulfurovum sp. (strain NBC37-1)).